A 102-amino-acid polypeptide reads, in one-letter code: MTAKICIVIKSFENQRSGLLLNTRKIGLPKKQTLYTVLRSPHIDKKSREQFEMRIHKQLLVIETETHKLREKLNWLKLHDLLGVQVKIIFYYQTRLDKVCKS.

It belongs to the universal ribosomal protein uS10 family.

Its subcellular location is the mitochondrion. This Marchantia polymorpha (Common liverwort) protein is Small ribosomal subunit protein uS10m (RPS10).